A 109-amino-acid chain; its full sequence is Phosphoribosyl-ATP pyrophosphatase (109 aa).

This sequence belongs to the PRA-PH family.

It is found in the cytoplasm. It carries out the reaction 1-(5-phospho-beta-D-ribosyl)-ATP + H2O = 1-(5-phospho-beta-D-ribosyl)-5'-AMP + diphosphate + H(+). Its pathway is amino-acid biosynthesis; L-histidine biosynthesis; L-histidine from 5-phospho-alpha-D-ribose 1-diphosphate: step 2/9. This Parvibaculum lavamentivorans (strain DS-1 / DSM 13023 / NCIMB 13966) protein is Phosphoribosyl-ATP pyrophosphatase.